The sequence spans 336 residues: Probable allantoicase (336 aa).

This sequence belongs to the allantoicase family.

It carries out the reaction allantoate + H2O = (S)-ureidoglycolate + urea. It participates in nitrogen metabolism; (S)-allantoin degradation; (S)-ureidoglycolate from allantoate (aminidohydrolase route): step 1/1. The chain is Probable allantoicase from Acinetobacter baumannii (strain ACICU).